The primary structure comprises 139 residues: Acidic phospholipase A2 H1E6 (139 aa).

Residues 1–16 (MRTLWILAVLQVGVEG) form the signal peptide. 7 cysteine pairs are disulfide-bonded: Cys42–Cys132, Cys44–Cys60, Cys59–Cys111, Cys65–Cys139, Cys66–Cys104, Cys73–Cys97, and Cys91–Cys102. The Ca(2+) site is built by Tyr43, Gly45, and Gly47. His63 is a catalytic residue. Asp64 is a Ca(2+) binding site. Residue Asp105 is part of the active site.

As to quaternary structure, homodimer. The cofactor is Ca(2+). In terms of tissue distribution, expressed by the venom gland.

It is found in the secreted. The catalysed reaction is a 1,2-diacyl-sn-glycero-3-phosphocholine + H2O = a 1-acyl-sn-glycero-3-phosphocholine + a fatty acid + H(+). In terms of biological role, snake venom phospholipase A2 (PLA2) that inhibits ADP-induced platelet aggregation. PLA2 catalyzes the calcium-dependent hydrolysis of the 2-acyl groups in 3-sn-phosphoglycerides. The chain is Acidic phospholipase A2 H1E6 from Calloselasma rhodostoma (Malayan pit viper).